Consider the following 117-residue polypeptide: Prefoldin subunit beta (117 aa).

It belongs to the prefoldin subunit beta family. Heterohexamer of two alpha and four beta subunits.

It localises to the cytoplasm. Functionally, molecular chaperone capable of stabilizing a range of proteins. Seems to fulfill an ATP-independent, HSP70-like function in archaeal de novo protein folding. This Thermococcus gammatolerans (strain DSM 15229 / JCM 11827 / EJ3) protein is Prefoldin subunit beta.